Reading from the N-terminus, the 354-residue chain is Chorismate synthase (354 aa).

2 residues coordinate NADP(+): Arg48 and Arg54. FMN is bound by residues Arg125–Ser127, Asn238–Ala239, Gly278, Lys293–Ser297, and Arg319.

It belongs to the chorismate synthase family. As to quaternary structure, homotetramer. FMNH2 serves as cofactor.

It catalyses the reaction 5-O-(1-carboxyvinyl)-3-phosphoshikimate = chorismate + phosphate. It functions in the pathway metabolic intermediate biosynthesis; chorismate biosynthesis; chorismate from D-erythrose 4-phosphate and phosphoenolpyruvate: step 7/7. In terms of biological role, catalyzes the anti-1,4-elimination of the C-3 phosphate and the C-6 proR hydrogen from 5-enolpyruvylshikimate-3-phosphate (EPSP) to yield chorismate, which is the branch point compound that serves as the starting substrate for the three terminal pathways of aromatic amino acid biosynthesis. This reaction introduces a second double bond into the aromatic ring system. The polypeptide is Chorismate synthase (Buchnera aphidicola subsp. Acyrthosiphon pisum (strain 5A)).